A 442-amino-acid polypeptide reads, in one-letter code: tRNA-2-methylthio-N(6)-dimethylallyladenosine synthase (442 aa).

The region spanning 2-120 (KKVFIRTFGC…LPKMIVDKET (119 aa)) is the MTTase N-terminal domain. Residues cysteine 11, cysteine 49, cysteine 83, cysteine 157, cysteine 161, and cysteine 164 each coordinate [4Fe-4S] cluster. In terms of domain architecture, Radical SAM core spans 143–375 (RVEGGAAFVS…NEVIEAETAR (233 aa)). The TRAM domain maps to 378-441 (QTMIGTVQRC…TFSLRGKIVE (64 aa)).

Belongs to the methylthiotransferase family. MiaB subfamily. In terms of assembly, monomer. It depends on [4Fe-4S] cluster as a cofactor.

Its subcellular location is the cytoplasm. The catalysed reaction is N(6)-dimethylallyladenosine(37) in tRNA + (sulfur carrier)-SH + AH2 + 2 S-adenosyl-L-methionine = 2-methylsulfanyl-N(6)-dimethylallyladenosine(37) in tRNA + (sulfur carrier)-H + 5'-deoxyadenosine + L-methionine + A + S-adenosyl-L-homocysteine + 2 H(+). Catalyzes the methylthiolation of N6-(dimethylallyl)adenosine (i(6)A), leading to the formation of 2-methylthio-N6-(dimethylallyl)adenosine (ms(2)i(6)A) at position 37 in tRNAs that read codons beginning with uridine. The protein is tRNA-2-methylthio-N(6)-dimethylallyladenosine synthase of Neisseria gonorrhoeae (strain NCCP11945).